Consider the following 458-residue polypeptide: MSFNFLKDNNKKVHFIGIGGISMSGLAEILLNSGYRVSGSDRSESDLTKHLQAKGAEIYIGHNGNNLKDVDLVVYTAAIPDSNPELVKARECNIQTMDRAEFLGHVMQGHKYNIAISGTHGKTTTTSMFSHISLSANLDPTILVGGNLDVINGNVRVGNSEYFVTEACEYKASFLKFYPYIGVILNIEADHLDFYKDINDIQNTFLKFAKLIPNDGFLIVNADDKRCVEVSKQVDCNVITFGINNGDVRAKNIVFNNGRPTFDVYRNEEKLFTLTLNVPGNHNILDALASISSALSLNVPVDSIIEGLSTFNGAHRRFEIKGKVDGITVVDDYAHHPTEIKAALNAAKNFPHKRVFCVFQPHTYSRTISLFDDFANSFSNADTLVLADIYAAREKDTGVVSSTMLGDKIRENGVNCKNLHSFEDIVTFLKGELKDGDLLITIGAGDVYRVGEMFLEAK.

118-124 (GTHGKTT) is an ATP binding site.

This sequence belongs to the MurCDEF family.

It is found in the cytoplasm. The catalysed reaction is UDP-N-acetyl-alpha-D-muramate + L-alanine + ATP = UDP-N-acetyl-alpha-D-muramoyl-L-alanine + ADP + phosphate + H(+). It participates in cell wall biogenesis; peptidoglycan biosynthesis. Functionally, cell wall formation. The chain is UDP-N-acetylmuramate--L-alanine ligase from Clostridium novyi (strain NT).